Here is a 667-residue protein sequence, read N- to C-terminus: Ribosomal oxygenase 1 (667 aa).

Position 1 is an N-acetylmethionine (M1). Over residues 1–11 (MDGLRASAGLL) the composition is skewed to low complexity. The tract at residues 1 to 99 (MDGLRASAGL…ATGREPHGQL (99 aa)) is disordered. Composition is skewed to basic residues over residues 12–22 (RRGRLRRRRQQ) and 35–44 (RPRKIRRQLR). Phosphoserine is present on residues S61, S64, and S108. The JmjC domain maps to 322-467 (CSLRLLCPQA…DFLEAVLPLA (146 aa)). Fe cation is bound by residues H368, D370, and H433.

This sequence belongs to the ROX family. NO66 subfamily. As to quaternary structure, interacts with SP7/OSX; the interaction is direct. Interacts with MYC. Interacts with PHF19; leading to its recruitment to H3K36me3 sites. Requires Fe(2+) as cofactor.

The protein resides in the nucleus. The protein localises to the nucleolus. Its subcellular location is the nucleoplasm. The enzyme catalyses N(6),N(6)-dimethyl-L-lysyl(36)-[histone H3] + 2 2-oxoglutarate + 2 O2 = L-lysyl(36)-[histone H3] + 2 formaldehyde + 2 succinate + 2 CO2. The catalysed reaction is N(6)-methyl-L-lysyl-[protein] + 2-oxoglutarate + O2 = L-lysyl-[protein] + formaldehyde + succinate + CO2. It catalyses the reaction L-histidyl-[protein] + 2-oxoglutarate + O2 = (3S)-3-hydroxy-L-histidyl-[protein] + succinate + CO2. Functionally, oxygenase that can act as both a histone lysine demethylase and a ribosomal histidine hydroxylase. Specifically demethylates 'Lys-4' (H3K4me) and 'Lys-36' (H3K36me) of histone H3, thereby playing a central role in histone code. Preferentially demethylates trimethylated H3 'Lys-4' (H3K4me3) and monomethylated H3 'Lys-4' (H3K4me1) residues, while it has weaker activity for dimethylated H3 'Lys-36' (H3K36me2). Acts as a regulator of osteoblast differentiation via its interaction with SP7/OSX by demethylating H3K4me and H3K36me, thereby inhibiting SP7/OSX-mediated promoter activation. Also catalyzes demethylation of non-histone proteins, such as CGAS: demethylation of monomethylated CGAS promotes interaction between CGAS and PARP1, followed by PARP1 inactivation. Also catalyzes the hydroxylation of 60S ribosomal protein L8 on 'His-216', thereby playing a role in ribosome biogenesis. Participates in MYC-induced transcriptional activation. The chain is Ribosomal oxygenase 1 (RIOX1) from Bos taurus (Bovine).